Consider the following 427-residue polypeptide: 3-phosphoshikimate 1-carboxyvinyltransferase (427 aa).

Lys27, Ser28, and Arg32 together coordinate 3-phosphoshikimate. Lys27 contacts phosphoenolpyruvate. 2 residues coordinate phosphoenolpyruvate: Gly95 and Arg123. 3-phosphoshikimate contacts are provided by Ser166, Ser167, Gln168, Ser192, Asp305, and Lys332. Gln168 lines the phosphoenolpyruvate pocket. Asp305 functions as the Proton acceptor in the catalytic mechanism. Arg336 and Arg377 together coordinate phosphoenolpyruvate.

The protein belongs to the EPSP synthase family. As to quaternary structure, monomer.

Its subcellular location is the cytoplasm. It carries out the reaction 3-phosphoshikimate + phosphoenolpyruvate = 5-O-(1-carboxyvinyl)-3-phosphoshikimate + phosphate. The protein operates within metabolic intermediate biosynthesis; chorismate biosynthesis. Catalyzes the transfer of the enolpyruvyl moiety of phosphoenolpyruvate (PEP) to the 5-hydroxyl of shikimate-3-phosphate (S3P) to produce enolpyruvyl shikimate-3-phosphate and inorganic phosphate. The sequence is that of 3-phosphoshikimate 1-carboxyvinyltransferase from Aeropyrum pernix (strain ATCC 700893 / DSM 11879 / JCM 9820 / NBRC 100138 / K1).